The primary structure comprises 141 residues: Putative nickel-responsive regulator (141 aa).

Positions 80, 91, 93, and 99 each coordinate Ni(2+).

The protein belongs to the transcriptional regulatory CopG/NikR family. It depends on Ni(2+) as a cofactor.

Functionally, transcriptional regulator. In Methanococcus maripaludis (strain C7 / ATCC BAA-1331), this protein is Putative nickel-responsive regulator.